The chain runs to 549 residues: Glucose-6-phosphate isomerase (549 aa).

3 positions are modified to N6-acetyllysine: Lys80, Lys228, and Lys234. Catalysis depends on Glu355, which acts as the Proton donor. Active-site residues include His386 and Lys514.

It belongs to the GPI family.

The protein resides in the cytoplasm. It catalyses the reaction alpha-D-glucose 6-phosphate = beta-D-fructose 6-phosphate. It participates in carbohydrate biosynthesis; gluconeogenesis. The protein operates within carbohydrate degradation; glycolysis; D-glyceraldehyde 3-phosphate and glycerone phosphate from D-glucose: step 2/4. Its function is as follows. Catalyzes the reversible isomerization of glucose-6-phosphate to fructose-6-phosphate. The sequence is that of Glucose-6-phosphate isomerase from Escherichia coli O139:H28 (strain E24377A / ETEC).